The chain runs to 127 residues: Gonadotropin subunit beta-1 (127 aa).

Residues 1-22 (MHLAVTALCLTLAPVLARASTS) form the signal peptide. Intrachain disulfides connect cysteine 23–cysteine 71, cysteine 37–cysteine 86, cysteine 40–cysteine 124, cysteine 48–cysteine 102, cysteine 52–cysteine 104, and cysteine 107–cysteine 114. N-linked (GlcNAc...) asparagine glycosylation is found at asparagine 27 and asparagine 44.

Belongs to the glycoprotein hormones subunit beta family. Heterodimer of an alpha and a beta chain.

It is found in the secreted. Its function is as follows. Involved in gametogenesis and steroidogenesis. The sequence is that of Gonadotropin subunit beta-1 (cgba) from Anguilla japonica (Japanese eel).